A 76-amino-acid polypeptide reads, in one-letter code: uncharacterized protein (76 aa).

To M.jannaschii MJ0857 N-terminal region.

This is an uncharacterized protein from Methanocaldococcus jannaschii (strain ATCC 43067 / DSM 2661 / JAL-1 / JCM 10045 / NBRC 100440) (Methanococcus jannaschii).